Reading from the N-terminus, the 619-residue chain is Dihydroxy-acid dehydratase (619 aa).

Asp81 contacts Mg(2+). Residue Cys122 participates in [2Fe-2S] cluster binding. The Mg(2+) site is built by Asp123 and Lys124. At Lys124 the chain carries N6-carboxylysine. Cys195 provides a ligand contact to [2Fe-2S] cluster. Mg(2+) is bound at residue Glu494. Ser520 acts as the Proton acceptor in catalysis.

Belongs to the IlvD/Edd family. In terms of assembly, homodimer. [2Fe-2S] cluster is required as a cofactor. It depends on Mg(2+) as a cofactor.

It carries out the reaction (2R)-2,3-dihydroxy-3-methylbutanoate = 3-methyl-2-oxobutanoate + H2O. It catalyses the reaction (2R,3R)-2,3-dihydroxy-3-methylpentanoate = (S)-3-methyl-2-oxopentanoate + H2O. It functions in the pathway amino-acid biosynthesis; L-isoleucine biosynthesis; L-isoleucine from 2-oxobutanoate: step 3/4. The protein operates within amino-acid biosynthesis; L-valine biosynthesis; L-valine from pyruvate: step 3/4. Functions in the biosynthesis of branched-chain amino acids. Catalyzes the dehydration of (2R,3R)-2,3-dihydroxy-3-methylpentanoate (2,3-dihydroxy-3-methylvalerate) into 2-oxo-3-methylpentanoate (2-oxo-3-methylvalerate) and of (2R)-2,3-dihydroxy-3-methylbutanoate (2,3-dihydroxyisovalerate) into 2-oxo-3-methylbutanoate (2-oxoisovalerate), the penultimate precursor to L-isoleucine and L-valine, respectively. This chain is Dihydroxy-acid dehydratase, found in Shewanella sp. (strain MR-7).